A 408-amino-acid chain; its full sequence is Dual-specificity RNA methyltransferase RlmN (408 aa).

Glu-122 serves as the catalytic Proton acceptor. Residues 128–369 form the Radical SAM core domain; the sequence is EEDRGTLCIS…NRAGYASPIR (242 aa). Cys-135 and Cys-380 are disulfide-bonded. [4Fe-4S] cluster contacts are provided by Cys-142, Cys-146, and Cys-149. Residues 206–207, Ser-238, 260–262, and Asn-337 each bind S-adenosyl-L-methionine; these read GE and SLH. Cys-380 (S-methylcysteine intermediate) is an active-site residue.

Belongs to the radical SAM superfamily. RlmN family. [4Fe-4S] cluster is required as a cofactor.

It is found in the cytoplasm. The enzyme catalyses adenosine(2503) in 23S rRNA + 2 reduced [2Fe-2S]-[ferredoxin] + 2 S-adenosyl-L-methionine = 2-methyladenosine(2503) in 23S rRNA + 5'-deoxyadenosine + L-methionine + 2 oxidized [2Fe-2S]-[ferredoxin] + S-adenosyl-L-homocysteine. It catalyses the reaction adenosine(37) in tRNA + 2 reduced [2Fe-2S]-[ferredoxin] + 2 S-adenosyl-L-methionine = 2-methyladenosine(37) in tRNA + 5'-deoxyadenosine + L-methionine + 2 oxidized [2Fe-2S]-[ferredoxin] + S-adenosyl-L-homocysteine. Functionally, specifically methylates position 2 of adenine 2503 in 23S rRNA and position 2 of adenine 37 in tRNAs. m2A2503 modification seems to play a crucial role in the proofreading step occurring at the peptidyl transferase center and thus would serve to optimize ribosomal fidelity. This Chelativorans sp. (strain BNC1) protein is Dual-specificity RNA methyltransferase RlmN.